A 625-amino-acid polypeptide reads, in one-letter code: Mitochondrial Rho GTPase 1 (625 aa).

Over 1–601 (MSDDETLADV…LRRVFYLNDS (601 aa)) the chain is Cytoplasmic. The 168-residue stretch at 3–170 (DDETLADVRI…EIFYYAQKAV (168 aa)) folds into the Miro 1 domain. Residues 16–23 (GDEGCGKT), 62–66 (DLSIK), and 123–126 (NKSD) contribute to the GTP site. EF-hand domains follow at residues 188-223 (RARK…CFGI) and 308-343 (EGVQ…CPVP). Residues Asp201, Asp203, Asp205, Tyr207, Glu212, Asp321, Asp323, Asp325, Cys327, and Glu332 each coordinate Ca(2+). The Miro 2 domain occupies 420–625 (HGTDRKVFQC…LAGFLVLKNL (206 aa)). GTP is bound by residues 433-440 (GAKDAGKT), 470-474 (RVKEE), and 537-540 (TKVE). The helical; Anchor for type IV membrane protein transmembrane segment at 602–622 (NLLSKITFGAAIVALAGFLVL) threads the bilayer. Residues 623–625 (KNL) are Mitochondrial intermembrane-facing.

It belongs to the mitochondrial Rho GTPase family.

Its subcellular location is the mitochondrion outer membrane. Functionally, mitochondrial GTPase involved in mitochondrial trafficking. Probably involved in control of anterograde transport of mitochondria and their subcellular distribution. Plays a role in maintaining mitochondrial morphology. The polypeptide is Mitochondrial Rho GTPase 1 (Caenorhabditis elegans).